The primary structure comprises 397 residues: Ribosomal RNA large subunit methyltransferase I (397 aa).

The 79-residue stretch at Ser-2–Lys-80 folds into the PUA domain.

The protein belongs to the methyltransferase superfamily. RlmI family.

It localises to the cytoplasm. The enzyme catalyses cytidine(1962) in 23S rRNA + S-adenosyl-L-methionine = 5-methylcytidine(1962) in 23S rRNA + S-adenosyl-L-homocysteine + H(+). Specifically methylates the cytosine at position 1962 (m5C1962) of 23S rRNA. The polypeptide is Ribosomal RNA large subunit methyltransferase I (Vibrio vulnificus (strain YJ016)).